Here is an 86-residue protein sequence, read N- to C-terminus: Conotoxin S6.10 (86 aa).

Residues 1–22 (MKLTCVLIIAVLFLTACQLATA) form the signal peptide. Positions 23-45 (KTYSKGRQKHRALRSTDKNIKLT) are excised as a propeptide. 3 disulfides stabilise this stretch: Cys-48–Cys-62, Cys-55–Cys-66, and Cys-61–Cys-73.

The protein belongs to the conotoxin O1 superfamily. Expressed by the venom duct.

The protein resides in the secreted. This chain is Conotoxin S6.10, found in Conus striatus (Striated cone).